A 1005-amino-acid polypeptide reads, in one-letter code: Ephrin type-A receptor 5 (1005 aa).

Residues 1–24 (MRGSGPRGAGRRRTQGRGGGGDTP) form a disordered region. The N-terminal stretch at 1–26 (MRGSGPRGAGRRRTQGRGGGGDTPRV) is a signal peptide. The Extracellular portion of the chain corresponds to 27–575 (PASLAGCYSA…GASNDQSQIP (549 aa)). The region spanning 62-240 (EVNLLDSRTV…YYKKCPSVVR (179 aa)) is the Eph LBD domain. Residues N266, N301, N371, N425, N438, and N463 are each glycosylated (N-linked (GlcNAc...) asparagine). 2 Fibronectin type-III domains span residues 359–469 (PPSA…TNQA) and 470–564 (APSP…TTPV). Residues 576–596 (IIGVSVTVGVILLAVMIGFLL) form a helical membrane-spanning segment. The Cytoplasmic segment spans residues 597–1005 (SGSCCECGCG…MDAVAQVTLE (409 aa)). Y652 and Y658 each carry phosphotyrosine; by autocatalysis. Positions 677–938 (ITIERVIGAG…DIVNMLDKLI (262 aa)) constitute a Protein kinase domain. ATP is bound by residues 683-691 (IGAGEFGEV) and K709. D802 (proton acceptor) is an active-site residue. 2 positions are modified to phosphotyrosine; by autocatalysis: Y835 and Y984. One can recognise an SAM domain in the interval 967 to 1005 (GAYRSVGEWLEATKMGRYTEIFMENGYSSMDAVAQVTLE).

This sequence belongs to the protein kinase superfamily. Tyr protein kinase family. Ephrin receptor subfamily. Heterotetramer upon binding of the ligand. The heterotetramer is composed of an ephrin dimer and a receptor dimer. Oligomerization is probably required to induce biological responses. Interacts (via SAM domain) with SAMD5 (via SAM domain). In terms of processing, phosphorylated. Phosphorylation is stimulated by the ligand EFNA5. Dephosphorylation upon stimulation by glucose, inhibits EPHA5 forward signaling and results in insulin secretion. In terms of tissue distribution, almost exclusively expressed in the nervous system. Predominantly expressed in neurons.

It is found in the cell membrane. Its subcellular location is the cell projection. The protein resides in the axon. It localises to the dendrite. The enzyme catalyses L-tyrosyl-[protein] + ATP = O-phospho-L-tyrosyl-[protein] + ADP + H(+). Receptor tyrosine kinase which binds promiscuously GPI-anchored ephrin-A family ligands residing on adjacent cells, leading to contact-dependent bidirectional signaling into neighboring cells. The signaling pathway downstream of the receptor is referred to as forward signaling while the signaling pathway downstream of the ephrin ligand is referred to as reverse signaling. Among GPI-anchored ephrin-A ligands, EFNA5 most probably constitutes the cognate/functional ligand for EPHA5. Functions as an axon guidance molecule during development and may be involved in the development of the retinotectal, entorhino-hippocampal and hippocamposeptal pathways. Together with EFNA5 plays also a role in synaptic plasticity in adult brain through regulation of synaptogenesis. In addition to its function in the nervous system, the interaction of EPHA5 with EFNA5 mediates communication between pancreatic islet cells to regulate glucose-stimulated insulin secretion. The polypeptide is Ephrin type-A receptor 5 (Epha5) (Rattus norvegicus (Rat)).